The primary structure comprises 259 residues: 5'-nucleotidase SurE (259 aa).

A divalent metal cation is bound by residues Asp-8, Asp-9, Ser-41, and Asn-99.

The protein belongs to the SurE nucleotidase family. The cofactor is a divalent metal cation.

The protein localises to the cytoplasm. The enzyme catalyses a ribonucleoside 5'-phosphate + H2O = a ribonucleoside + phosphate. Its function is as follows. Nucleotidase that shows phosphatase activity on nucleoside 5'-monophosphates. The polypeptide is 5'-nucleotidase SurE (Synechococcus sp. (strain JA-3-3Ab) (Cyanobacteria bacterium Yellowstone A-Prime)).